The sequence spans 351 residues: MMTVRDPRFPSSSTTAIQSDAAIKFCDTTLRDGEQAPGVAFTAAEKLAIAAALDAIGVHQIEAGIPAMGVTERDVLREILATDPHADIVGWCRADHRDVEAAASCGLVTAHLTIPVSDLHLKSKLGRDRAWARLRVRDCVADATDRGMRVSVGFEDASRADDAFVTDLAGELRELGVTRLRWADTVGLLDPVSAHDRLGRLVRAVPGPWEIHAHDDFGLATANTIAAVQAGFTWVSTTVLGLGERAGNAPIEEVAMALRHLLKLPVDLDTTSFRSLARLVSRAARRPLPAGKAVVGESVFAHESGIHVHGILRHPATYEPFDPAEVGGRRRLAIGKHSGRASVRYALEQYG.

The region spanning 23 to 272 is the Pyruvate carboxyltransferase domain; that stretch reads IKFCDTTLRD…KLPVDLDTTS (250 aa).

Belongs to the alpha-IPM synthase/homocitrate synthase family.

It carries out the reaction acetyl-CoA + 2-oxoglutarate + H2O = (2R)-homocitrate + CoA + H(+). Its function is as follows. This protein is a Fe-Mo-cofactor biosynthetic component. The sequence is that of Homocitrate synthase (nifV) from Frankia alni.